The sequence spans 103 residues: Phosphoribosyl-ATP pyrophosphatase (103 aa).

This sequence belongs to the PRA-PH family.

Its subcellular location is the cytoplasm. It catalyses the reaction 1-(5-phospho-beta-D-ribosyl)-ATP + H2O = 1-(5-phospho-beta-D-ribosyl)-5'-AMP + diphosphate + H(+). It participates in amino-acid biosynthesis; L-histidine biosynthesis; L-histidine from 5-phospho-alpha-D-ribose 1-diphosphate: step 2/9. The chain is Phosphoribosyl-ATP pyrophosphatase from Cereibacter sphaeroides (strain ATCC 17025 / ATH 2.4.3) (Rhodobacter sphaeroides).